The sequence spans 739 residues: Catalase-peroxidase 2 (739 aa).

Positions 1–26 (MKKSTIPTLSALTLAMSLAFGGSVIA) are cleaved as a signal peptide. The segment at residues 105-227 (WHSAGVYRIF…MGATQMGLIY (123 aa)) is a cross-link (tryptophyl-tyrosyl-methioninium (Trp-Tyr) (with M-253)). Histidine 106 functions as the Proton acceptor in the catalytic mechanism. Positions 227–253 (YVNPEGPNGVPDPLASAKEIRDTFGRM) form a cross-link, tryptophyl-tyrosyl-methioninium (Tyr-Met) (with W-105). Residue histidine 268 participates in heme b binding.

It belongs to the peroxidase family. Peroxidase/catalase subfamily. Homodimer or homotetramer. Heme b is required as a cofactor. In terms of processing, formation of the three residue Trp-Tyr-Met cross-link is important for the catalase, but not the peroxidase activity of the enzyme.

It carries out the reaction H2O2 + AH2 = A + 2 H2O. It catalyses the reaction 2 H2O2 = O2 + 2 H2O. Bifunctional enzyme with both catalase and broad-spectrum peroxidase activity. The polypeptide is Catalase-peroxidase 2 (Shewanella sp. (strain MR-7)).